The primary structure comprises 880 residues: GAS2-like protein 2 (880 aa).

The 128-residue stretch at 32 to 159 (EAMKEDLAEW…CLLELGRRAW (128 aa)) folds into the Calponin-homology (CH) domain. Residues 180 to 200 (RRELALPPPDPSPPAPPRRQP) form a disordered region. Pro residues predominate over residues 185–198 (LPPPDPSPPAPPRR). One can recognise a GAR domain in the interval 201–273 (CHFRNLDQMV…HYLDKHDPCR (73 aa)). Disordered regions lie at residues 283–360 (SFLK…MAPF), 372–437 (WRQP…NPTP), 489–533 (ESVR…ELGR), and 676–880 (APTG…ESWV). The span at 301–315 (GPSQTQPTMTISRSQ) shows a compositional bias: polar residues. The tract at residues 438 to 880 (QRLRAIEATT…PLPPEEESWV (443 aa)) is interaction with ADORA2A. A compositionally biased stretch (pro residues) spans 506–515 (RLPPARPPTP). Positions 725 to 734 (QDCSASTVSA) are enriched in polar residues. Composition is skewed to basic residues over residues 757-767 (KGRRTLRKPKR) and 774-785 (LKLRPRIRPRRD).

The protein belongs to the GAS2 family. As to quaternary structure, interacts with ADORA2A (via its cytoplasmic C-terminal domain). Interacts with GNAS, GNAL, GNAQ, and GNA13. Interacts with MAPRE1. As to expression, expressed in bronchial and nasal epithelial cells (at protein level). Expressed in brain, kidney, lung, testis, fallopian tubes, and skeletal muscle. Expressed at low levels in stomach and colon.

The protein localises to the cytoplasm. It is found in the cytoskeleton. It localises to the cell membrane. The protein resides in the stress fiber. Its subcellular location is the cilium basal body. Its function is as follows. Involved in the cross-linking of microtubules and microfilaments. Regulates microtubule dynamics and stability by interacting with microtubule plus-end tracking proteins, such as MAPRE1, to regulate microtubule growth along actin stress fibers. Enhances ADORA2-mediated adenylyl cyclase activation by acting as a scaffold to recruit trimeric G-protein complexes to ADORA2A. Regulates ciliary orientation and performance in cells located in the airway. The chain is GAS2-like protein 2 (GAS2L2) from Homo sapiens (Human).